We begin with the raw amino-acid sequence, 198 residues long: uncharacterized protein (198 aa).

The interval 51-74 (EEPDNGDDRGSRRTTGQGRKWAAH) is disordered.

This is an uncharacterized protein from Homo sapiens (Human).